Here is a 464-residue protein sequence, read N- to C-terminus: Gamma-aminobutyric acid receptor subunit rho-3 (464 aa).

The N-terminal stretch at 1–15 is a signal peptide; the sequence is MVLAFWLAFFTYTWI. The Extracellular portion of the chain corresponds to 16–263; sequence TLMLDASAVK…LFINFVLRRH (248 aa). 4-aminobutanoate is bound at residue Arg108. N-linked (GlcNAc...) asparagine glycosylation is present at Asn123. Residue Ser172 participates in 4-aminobutanoate binding. Cys181 and Cys195 form a disulfide bridge. Asn194 carries an N-linked (GlcNAc...) asparagine glycan. Glu200 is a 4-aminobutanoate binding site. The chain crosses the membrane as a helical span at residues 264 to 284; sequence IFFFVLQTYFPAMLMVMLSWV. Residues 285 to 296 lie on the Cytoplasmic side of the membrane; the sequence is SFWIDRRAVPAR. Residues 297–317 traverse the membrane as a helical segment; sequence VSLGITTVLTMSTIVTGVSAS. The Extracellular portion of the chain corresponds to 318–328; that stretch reads MPQVSYVKAVD. A helical membrane pass occupies residues 329 to 349; sequence VYMWVSSLFVFLSVIEYAAVN. The tract at residues 344-445 is interaction with SQSTM1; that stretch reads EYAAVNYLTT…NNHVIDTYSR (102 aa). The Cytoplasmic portion of the chain corresponds to 350-443; it reads YLTTVEEWKQ…LENNHVIDTY (94 aa). Residues 444–464 traverse the membrane as a helical segment; that stretch reads SRIVFPVVYIIFNLFYWGIYV.

The protein belongs to the ligand-gated ion channel (TC 1.A.9) family. Gamma-aminobutyric acid receptor (TC 1.A.9.5) subfamily. GABRR3 sub-subfamily. In terms of assembly, three rho subunits (rho-1/GBRR1, rho-2/GBRR2 and rho-3/GBRR3) coassemble either to form functional homopentamers or heteropentamers. Forms a ternary complex with SQSTM1 and PRKCZ. Expressed in retina.

It localises to the postsynaptic cell membrane. The protein localises to the cell membrane. It catalyses the reaction chloride(in) = chloride(out). Activated by agonists in the following the potency order: muscimol &gt; TACP &gt; TACA &gt; thiomuscimol &gt; CAMP &gt; CACA, when forming a homopentamer. Inhibited by TPMPA, a rho-specific antagonist, when forming a homopentamer. Inhibited antagonists in the following the potency order: TAMP = TPMPA &gt; P4MPA = THIP &gt; 14AA &gt; 3-APA, when forming a homopentamer. Functionally, rho subunit of the pentameric ligand-gated chloride channels responsible for mediating the effects of gamma-aminobutyric acid (GABA), the major inhibitory neurotransmitter in the brain. Rho-containing GABA-gated chloride channels are a subclass of GABA(A) receptors (GABAARs) entirely composed of rho subunits, where GABA molecules bind at the rho intersubunit interfaces. When activated by GABA, rho-GABAARs selectively allow the flow of chloride anions across the cell membrane down their electrochemical gradient. The protein is Gamma-aminobutyric acid receptor subunit rho-3 of Rattus norvegicus (Rat).